Reading from the N-terminus, the 230-residue chain is Secretory carrier-associated membrane protein 4 (230 aa).

Topologically, residues 1-39 (MAGKENNFPPLPHFLPLKPCFYQDFSDEIPVEHQVLVKR) are cytoplasmic. 4 helical membrane passes run 40–60 (IYRL…ACLA), 61–81 (WWIA…LVLF), 106–126 (MAFF…AIGF), and 149–169 (VVML…AITI). The Cytoplasmic segment spans residues 170–230 (VKVHRIYRGA…SYSTSGSQWP (61 aa)). Phosphothreonine is present on threonine 194. The disordered stretch occupies residues 197-230 (NPPSREAQFNSFSGNSLPEYPTVPSYSTSGSQWP). 2 stretches are compositionally biased toward polar residues: residues 203–212 (AQFNSFSGNS) and 220–230 (PSYSTSGSQWP).

This sequence belongs to the SCAMP family.

Its subcellular location is the membrane. Probably involved in membrane protein trafficking. This Rattus norvegicus (Rat) protein is Secretory carrier-associated membrane protein 4 (Scamp4).